The primary structure comprises 42 residues: MKVIGSLKSAKIRDKDCRVVRRKGRIYVINKKNPRFKARQGY.

The protein belongs to the bacterial ribosomal protein bL36 family.

This Ehrlichia ruminantium (strain Gardel) protein is Large ribosomal subunit protein bL36.